Reading from the N-terminus, the 444-residue chain is Exodeoxyribonuclease 7 large subunit (444 aa).

Belongs to the XseA family. As to quaternary structure, heterooligomer composed of large and small subunits.

The protein localises to the cytoplasm. The catalysed reaction is Exonucleolytic cleavage in either 5'- to 3'- or 3'- to 5'-direction to yield nucleoside 5'-phosphates.. Its function is as follows. Bidirectionally degrades single-stranded DNA into large acid-insoluble oligonucleotides, which are then degraded further into small acid-soluble oligonucleotides. This Rickettsia conorii (strain ATCC VR-613 / Malish 7) protein is Exodeoxyribonuclease 7 large subunit.